Reading from the N-terminus, the 134-residue chain is Iron-sulfur cluster insertion protein ErpA (134 aa).

Iron-sulfur cluster is bound by residues Cys47, Cys126, and Cys128.

The protein belongs to the HesB/IscA family. In terms of assembly, homodimer. Requires iron-sulfur cluster as cofactor.

In terms of biological role, required for insertion of 4Fe-4S clusters for at least IspG. This chain is Iron-sulfur cluster insertion protein ErpA, found in Coxiella burnetii (strain RSA 331 / Henzerling II).